A 1110-amino-acid chain; its full sequence is Sex-determining transformer protein 1 (1110 aa).

Disordered stretches follow at residues 1–103 (MMAP…AQQS) and 170–202 (TINGKRVGRPPGTFKRPQNNAANSSNSGNDSDM). A compositionally biased stretch (basic and acidic residues) spans 44-61 (GSEDKQPGGGDVKTENDP). The span at 65–90 (GLGSATSNFIQSSVPPSHQTLSNPLQ) shows a compositional bias: polar residues. A compositionally biased stretch (low complexity) spans 188-201 (NNAANSSNSGNDSD). The segment at 208–233 (LTCRWKSCNSSFQTLKALVDHVQESH) adopts a C2H2-type 1; low DNA-binding affinity zinc-finger fold. A C2H2-type 2; low DNA-binding affinity zinc finger spans residues 244 to 270 (WRCEWEGCDRNETFKALYMLIVHVRRH). C2H2-type zinc fingers lie at residues 276-300 (NKCEYPGCGKEYSRLENLKTHRRTH), 306-331 (YKCEFADCEKAFSNASDRAKHQNRTH), and 337-362 (YSCQIPQCTKSYTDPSSLRKHIKAVH). Disordered stretches follow at residues 363-397 (GDDEYEKAKKSRPANYSNRRRPDHRLAPPTGAMSH), 594-682 (EVEP…GSGE), 875-895 (RNVGGFGDEEDRNNRGHDQDR), and 1057-1110 (QEQP…RHQF). Low complexity predominate over residues 597–606 (PLQQQQQQEP). Residues 641–652 (GNNGDGGFGGSG) are compositionally biased toward gly residues. Over residues 669–678 (PISQNGSRAS) the composition is skewed to polar residues. A compositionally biased stretch (basic and acidic residues) spans 886-895 (RNNRGHDQDR). A compositionally biased stretch (polar residues) spans 1057–1066 (QEQPTSSFSS). Residues 1076 to 1086 (ALPPPPPPPAP) show a composition bias toward pro residues. Basic and acidic residues predominate over residues 1092 to 1103 (SADNKDDSENIP).

This sequence belongs to the GLI C2H2-type zinc-finger protein family. Interacts with the MX regulatory domain of tra-2. In terms of tissue distribution, expressed in intestine and gonads (at protein level).

It is found in the cytoplasm. It localises to the nucleus. Plays a major role in controlling sexual phenotype. Terminal global regulator in a well-characterized cascade of sex-determining genes. Promotes female development. Interacts with tra-2 to promote spermatogenesis. Promotes spermatogenesis through the Tip60 HAT complex and by regulating the expression of genes, such as fog-3, required for male development. Association with chromatin and at the fog-3 promoter requires wdr-5.1, and may also require wdr-5.2. With trr-1, activates the fog-3 gene to determine sperm/oocyte cell fate. In hermaphrodites, binds to an intronic regulatory site in the ceh-30 gene, preventing ceh-30 transcription and thereby preventing survival of the CEM (cephalic male) sensory neurons. Represses the expression of the transcription factor dmd-3 in hermaphrodites to govern the timing and extent of male tail tip morphogenesis. Plays a role in controlling the sex-specific differentiation of PHC sensory neurons and represses the development of male-specific morphological features. The chain is Sex-determining transformer protein 1 from Caenorhabditis elegans.